The sequence spans 262 residues: MKIALGIEYDGSRYFGWQRQDEVESVQQKLEEALSIVANAPIEVFCAGRTDSGVHGTGQVVHFETQAIRPLQSWCFGTNANLPDDIAVKWAVEVSEDFHARFSATARRYRYIIFNNKLRSAILPKGVSHYHYELDHQKMHEAGQFLLGENDFSSFRAAKCQSHTPWRNVHYLNVSRLGNYIVVDIQANAFVHHMVRNIVGSLIEVGQGRQPVEWIQWLLAQRDRTLAAPTAKAEGLYLVDVHYPERFGIPKTALGPLFLADS.

The Nucleophile role is filled by Asp-51. Tyr-109 is a binding site for substrate.

It belongs to the tRNA pseudouridine synthase TruA family. In terms of assembly, homodimer.

It carries out the reaction uridine(38/39/40) in tRNA = pseudouridine(38/39/40) in tRNA. Its function is as follows. Formation of pseudouridine at positions 38, 39 and 40 in the anticodon stem and loop of transfer RNAs. This chain is tRNA pseudouridine synthase A, found in Actinobacillus pleuropneumoniae serotype 3 (strain JL03).